We begin with the raw amino-acid sequence, 556 residues long: Aplysianin-A (556 aa).

Positions 1-19 (MAVRFLALGLLIFVTSCSG) are cleaved as a signal peptide. N-linked (GlcNAc...) asparagine glycans are attached at residues Asn-150, Asn-177, Asn-374, Asn-399, Asn-414, and Asn-430.

It to A.fulica achacin protein. As to quaternary structure, homotetramer. As to expression, albumen gland.

Has antibacterial activity against Gram-negative and Gram-positive bacteria. In Aplysia kurodai (Kuroda's sea hare), this protein is Aplysianin-A.